Reading from the N-terminus, the 151-residue chain is C-C motif chemokine 25 (151 aa).

An N-terminal signal peptide occupies residues 1–23 (MRPWLLACLVACFVGAWAPAIHA). 2 disulfide bridges follow: Cys30–Cys58 and Cys31–Cys75. The disordered stretch occupies residues 93–151 (RNKKDSKPHHSGRRFFQGPQSGVRKLSSGTSRPLLLKFSGPTRSSKRKASLLTTAIPGP).

It belongs to the intercrine beta (chemokine CC) family.

It is found in the secreted. Functionally, potentially involved in T-cell development. Recombinant protein shows chemotactic activity on thymocytes, macrophages, THP-1 cells, and dendritics cells but is inactive on peripheral blood lymphocytes and neutrophils. Binds to CCR9. Binds to atypical chemokine receptor ACKR4 and mediates the recruitment of beta-arrestin (ARRB1/2) to ACKR4. The polypeptide is C-C motif chemokine 25 (CCL25) (Sus scrofa (Pig)).